A 278-amino-acid chain; its full sequence is Neuronal membrane glycoprotein M6-a (278 aa).

An N-acetylmethionine modification is found at Met1. Topologically, residues 1 to 22 (MEENMEEGQTQKGCFECCIKCL) are cytoplasmic. Residues 23 to 43 (GGIPYASLIATILLYAGVALF) form a helical membrane-spanning segment. At 44-84 (CGCGHEALSGTVNILQTYFEMARTAGDTLDVFTMIDIFKYV) the chain is on the extracellular side. A helical membrane pass occupies residues 85–105 (IYGIAAAFFVYGILLMVEGFF). The Cytoplasmic portion of the chain corresponds to 106-127 (TTGAIKDLYGDFKITTCGRCVS). A helical transmembrane segment spans residues 128 to 148 (AWFIMLTYLFMLAWLGVTAFT). Residues 149-213 (SLPVYMYFNL…STELNMTFHL (65 aa)) lie on the Extracellular side of the membrane. N-linked (GlcNAc...) asparagine glycosylation is present at Asn164. An intrachain disulfide couples Cys174 to Cys192. N-linked (GlcNAc...) asparagine glycosylation is present at Asn208. The helical transmembrane segment at 214 to 234 (FIVALAGAGAAVIAMVHYLMV) threads the bilayer. Topologically, residues 235–278 (LSANWAYVKDACRMQKYEDIKSKEEQELHDIHSTRSKERLNAYT) are cytoplasmic. A Phosphoserine modification is found at Ser256. A Phosphothreonine modification is found at Thr278.

It belongs to the myelin proteolipid protein family. In terms of assembly, interacts with OPRM1. Interacts with palmitoyltransferase ZDHHC17/HIP14; the interaction leads to palmitoylation of GPM6A. In terms of processing, N-glycosylated. Palmitoylated by ZDHHC17/HIP14.

It localises to the cell membrane. The protein localises to the cell projection. Its subcellular location is the axon. It is found in the growth cone. The protein resides in the dendritic spine. It localises to the filopodium. The protein localises to the neuron projection. Functionally, involved in neuronal differentiation, including differentiation and migration of neuronal stem cells. Plays a role in neuronal plasticity and is involved in neurite and filopodia outgrowth, filopodia motility and probably synapse formation. GPM6A-induced filopodia formation involves mitogen-activated protein kinase (MAPK) and Src signaling pathways. May be involved in neuronal NGF-dependent Ca(2+) influx. May be involved in regulation of endocytosis and intracellular trafficking of G-protein-coupled receptors (GPCRs); may enhance internalization and recycling of mu-type opioid receptor. This is Neuronal membrane glycoprotein M6-a (GPM6A) from Bos taurus (Bovine).